Consider the following 302-residue polypeptide: tRNA dimethylallyltransferase (302 aa).

7–14 provides a ligand contact to ATP; it reads GPTASGKS. 9–14 is a substrate binding site; the sequence is TASGKS. 2 interaction with substrate tRNA regions span residues 32–35 and 156–160; these read DSMQ and QRILR.

It belongs to the IPP transferase family. In terms of assembly, monomer. Mg(2+) is required as a cofactor.

The catalysed reaction is adenosine(37) in tRNA + dimethylallyl diphosphate = N(6)-dimethylallyladenosine(37) in tRNA + diphosphate. Its function is as follows. Catalyzes the transfer of a dimethylallyl group onto the adenine at position 37 in tRNAs that read codons beginning with uridine, leading to the formation of N6-(dimethylallyl)adenosine (i(6)A). The chain is tRNA dimethylallyltransferase from Beijerinckia indica subsp. indica (strain ATCC 9039 / DSM 1715 / NCIMB 8712).